Here is a 490-residue protein sequence, read N- to C-terminus: Cytochrome P450 2C28 (490 aa).

Ser127 is subject to Phosphoserine. 2 positions are modified to N6-acetyllysine: Lys249 and Lys375. A heme-binding site is contributed by Cys435.

The protein belongs to the cytochrome P450 family. Heme is required as a cofactor. As to expression, liver.

The protein localises to the endoplasmic reticulum membrane. It localises to the microsome membrane. The catalysed reaction is an organic molecule + reduced [NADPH--hemoprotein reductase] + O2 = an alcohol + oxidized [NADPH--hemoprotein reductase] + H2O + H(+). Catalyzes the N-demethylation of aminopyrine and benzphetamine, but does not catalyze the hydroxylation of tolbutamide, testosterone, and progesterone. The sequence is that of Cytochrome P450 2C28 (CYP2C28) from Mesocricetus auratus (Golden hamster).